The sequence spans 313 residues: Non-structural protein 3 (313 aa).

The RNA-binding stretch occupies residues 1-149 (MLKMESTQQM…TRLMKDKIEG (149 aa)). The tract at residues 150-206 (GEVEVDDSYVDEKMEIDTIDWKSRYDQLEKRFEALKQRVNEKYNTWVQKAKKVNENM) is dimerization. Positions 166–237 (DTIDWKSRYD…NKLEADLQGK (72 aa)) form a coiled coil. An interaction with host ZC3H7B region spans residues 170 to 234 (WKSRYDQLEK…QYCNKLEADL (65 aa)). The segment at 208 to 313 (SLQNVISQQQ…KQCNYEYAYE (106 aa)) is interaction with host EIF4G1.

It belongs to the rotavirus NSP3 family. Homodimer. Interacts (via the coiled-coil region) with host ZC3H7B (via LD motif). Interacts with host EIF4G1.

It is found in the host cytoplasm. Functionally, plays an important role in stimulating the translation of viral mRNAs. These mRNAs are capped but not polyadenylated, instead terminating in a conserved sequence 'GACC' at the 3' that is recognized by NSP3, which competes with host PABPC1 for EIF4G1 binding. The interaction between NSP3 and host EIF4G1 stabilizes the EIF4E-EIF4G1 interaction, thereby facilitating the initiation of capped mRNA translation. The protein is Non-structural protein 3 of Homo sapiens (Human).